The sequence spans 294 residues: 4-hydroxy-tetrahydrodipicolinate synthase (294 aa).

A pyruvate-binding site is contributed by threonine 45. Tyrosine 133 (proton donor/acceptor) is an active-site residue. Catalysis depends on lysine 161, which acts as the Schiff-base intermediate with substrate. Isoleucine 203 lines the pyruvate pocket.

The protein belongs to the DapA family. Homotetramer; dimer of dimers.

The protein resides in the cytoplasm. The catalysed reaction is L-aspartate 4-semialdehyde + pyruvate = (2S,4S)-4-hydroxy-2,3,4,5-tetrahydrodipicolinate + H2O + H(+). It functions in the pathway amino-acid biosynthesis; L-lysine biosynthesis via DAP pathway; (S)-tetrahydrodipicolinate from L-aspartate: step 3/4. Functionally, catalyzes the condensation of (S)-aspartate-beta-semialdehyde [(S)-ASA] and pyruvate to 4-hydroxy-tetrahydrodipicolinate (HTPA). This chain is 4-hydroxy-tetrahydrodipicolinate synthase, found in Buchnera aphidicola subsp. Baizongia pistaciae (strain Bp).